The primary structure comprises 147 residues: uncharacterized protein (147 aa).

This is an uncharacterized protein from Escherichia coli.